The sequence spans 842 residues: Elongation factor G, mitochondrial (842 aa).

Residues 1-58 constitute a mitochondrion transit peptide; the sequence is MVAIPRVAAARSLARQLARQSLRTTSFASAPVRIAIASTPLARSPSSFRSLSSSTRRS. One can recognise a tr-type G domain in the interval 93-398; that stretch reads VRQRNVGISA…GVCSYLPNPA (306 aa). GTP-binding positions include 102–109, 196–200, and 250–253; these read AHIDSGKT, DTPGH, and NKMD. The disordered stretch occupies residues 423-442; sequence AGEDQEAAAEARKNAAPPVL.

This sequence belongs to the TRAFAC class translation factor GTPase superfamily. Classic translation factor GTPase family. EF-G/EF-2 subfamily.

It localises to the mitochondrion. The protein operates within protein biosynthesis; polypeptide chain elongation. Functionally, mitochondrial GTPase that catalyzes the GTP-dependent ribosomal translocation step during translation elongation. During this step, the ribosome changes from the pre-translocational (PRE) to the post-translocational (POST) state as the newly formed A-site-bound peptidyl-tRNA and P-site-bound deacylated tRNA move to the P and E sites, respectively. Catalyzes the coordinated movement of the two tRNA molecules, the mRNA and conformational changes in the ribosome. This Mycosarcoma maydis (Corn smut fungus) protein is Elongation factor G, mitochondrial.